Consider the following 301-residue polypeptide: ATP synthase gamma chain (301 aa).

Belongs to the ATPase gamma chain family. In terms of assembly, F-type ATPases have 2 components, CF(1) - the catalytic core - and CF(0) - the membrane proton channel. CF(1) has five subunits: alpha(3), beta(3), gamma(1), delta(1), epsilon(1). CF(0) has three main subunits: a, b and c.

The protein resides in the cell inner membrane. Functionally, produces ATP from ADP in the presence of a proton gradient across the membrane. The gamma chain is believed to be important in regulating ATPase activity and the flow of protons through the CF(0) complex. This chain is ATP synthase gamma chain, found in Bordetella bronchiseptica (strain ATCC BAA-588 / NCTC 13252 / RB50) (Alcaligenes bronchisepticus).